A 96-amino-acid polypeptide reads, in one-letter code: Transcription and mRNA export factor SUS1 (96 aa).

This sequence belongs to the ENY2 family. Component of the nuclear pore complex (NPC)-associated TREX-2 complex (transcription and export complex 2), composed of at least SUS1, SAC3, THP1, SEM1, and CDC31. TREX-2 contains 2 SUS1 chains. The TREX-2 complex interacts with the nucleoporin NUP1. Component of the 1.8 MDa SAGA transcription coactivator-HAT complex. SAGA is built of 5 distinct domains with specialized functions. Within the SAGA complex, SUS1, SGF11, SGF73 and UBP8 form an additional subcomplex of SAGA called the DUB module (deubiquitination module). Interacts directly with THP1, SAC3, SGF11, and with the RNA polymerase II.

It is found in the nucleus. The protein resides in the nucleoplasm. The protein localises to the cytoplasm. Its subcellular location is the P-body. In terms of biological role, involved in mRNA export coupled transcription activation by association with both the TREX-2 and the SAGA complexes. At the promoters, SAGA is required for recruitment of the basal transcription machinery. It influences RNA polymerase II transcriptional activity through different activities such as TBP interaction and promoter selectivity, interaction with transcription activators, and chromatin modification through histone acetylation and deubiquitination. Within the SAGA complex, participates in a subcomplex required for deubiquitination of H2B and for the maintenance of steady-state H3 methylation levels. The TREX-2 complex functions in docking export-competent ribonucleoprotein particles (mRNPs) to the nuclear entrance of the nuclear pore complex (nuclear basket). TREX-2 participates in mRNA export and accurate chromatin positioning in the nucleus by tethering genes to the nuclear periphery. May also be involved in cytoplasmic mRNA decay by interaction with components of P-bodies. This chain is Transcription and mRNA export factor SUS1, found in Kluyveromyces lactis (strain ATCC 8585 / CBS 2359 / DSM 70799 / NBRC 1267 / NRRL Y-1140 / WM37) (Yeast).